A 389-amino-acid polypeptide reads, in one-letter code: Adenylyltransferase and sulfurtransferase uba4 (389 aa).

ATP is bound by residues G40, D61, 68–72 (SNLHR), K85, and 129–130 (DT). The Zn(2+) site is built by C171 and C174. C188 functions as the Glycyl thioester intermediate; for adenylyltransferase activity in the catalytic mechanism. Positions 252 and 255 each coordinate Zn(2+). The Rhodanese domain occupies 298–387 (AQRAPYLVDV…WSRQIDPNFP (90 aa)). The active-site Cysteine persulfide intermediate is C347.

In the N-terminal section; belongs to the HesA/MoeB/ThiF family. UBA4 subfamily. Zn(2+) serves as cofactor.

It localises to the cytoplasm. Its subcellular location is the cytosol. The enzyme catalyses [molybdopterin-synthase sulfur-carrier protein]-C-terminal Gly-Gly + ATP + H(+) = [molybdopterin-synthase sulfur-carrier protein]-C-terminal Gly-Gly-AMP + diphosphate. The catalysed reaction is [molybdopterin-synthase sulfur-carrier protein]-C-terminal Gly-Gly-AMP + S-sulfanyl-L-cysteinyl-[cysteine desulfurase] + AH2 = [molybdopterin-synthase sulfur-carrier protein]-C-terminal-Gly-aminoethanethioate + L-cysteinyl-[cysteine desulfurase] + A + AMP + 2 H(+). It functions in the pathway tRNA modification; 5-methoxycarbonylmethyl-2-thiouridine-tRNA biosynthesis. It participates in cofactor biosynthesis; molybdopterin biosynthesis. In terms of biological role, plays a central role in 2-thiolation of mcm(5)S(2)U at tRNA wobble positions of cytosolic tRNA(Lys), tRNA(Glu) and tRNA(Gln). Also essential during biosynthesis of the molybdenum cofactor. Acts by mediating the C-terminal thiocarboxylation of sulfur carriers URM1 and CNX5/MOCS2A. Its N-terminus first activates urm1 and mocs2a as acyl-adenylates (-COAMP), then the persulfide sulfur on the catalytic cysteine is transferred to URM1 and CNX5/MOCS2A to form thiocarboxylation (-COSH) of their C-terminus. The reaction probably involves hydrogen sulfide that is generated from the persulfide intermediate and that acts as a nucleophile towards URM1 and CNX5/MOCS2A. Subsequently, a transient disulfide bond is formed. Does not use thiosulfate as sulfur donor; NFS1 probably acting as a sulfur donor for thiocarboxylation reactions. Required for growth on nitrate as a sole nitrogen source. In Ogataea parapolymorpha (strain ATCC 26012 / BCRC 20466 / JCM 22074 / NRRL Y-7560 / DL-1) (Yeast), this protein is Adenylyltransferase and sulfurtransferase uba4.